Here is a 147-residue protein sequence, read N- to C-terminus: Hemoglobin subunit epsilon-Y2 (147 aa).

The Globin domain occupies N3–H147. S51 bears the Phosphoserine mark. Residues H64 and H93 each coordinate heme b.

The protein belongs to the globin family. As to expression, high expression in yolk sac blood islands, fetal liver, and embryonic erythrocytes. Very low levels in adult liver and spleen.

Its function is as follows. Hemoglobin epsilon chain is a beta-type chain found in early embryos. This chain is Hemoglobin subunit epsilon-Y2 (Hbb-y), found in Mus musculus (Mouse).